Reading from the N-terminus, the 287-residue chain is Nucleotide-binding protein MXAN_6564 (287 aa).

Position 13 to 20 (13 to 20 (GMSGSGKS)) interacts with ATP. Position 62-65 (62-65 (DVRE)) interacts with GTP.

The protein belongs to the RapZ-like family.

In terms of biological role, displays ATPase and GTPase activities. In Myxococcus xanthus (strain DK1622), this protein is Nucleotide-binding protein MXAN_6564.